Here is a 345-residue protein sequence, read N- to C-terminus: Skn-1 dependent zygotic transcript 15 protein (345 aa).

The region spanning 11 to 55 is the F-box domain; sequence AFGLHKLPHLVSDKVVKSMVPMELFTYSMVAEETKALVKRLFKKV.

Functionally, may have a role in embryogenesis. This Caenorhabditis elegans protein is Skn-1 dependent zygotic transcript 15 protein (sdz-15).